The chain runs to 487 residues: GTPase Der (487 aa).

EngA-type G domains lie at 3–166 (PVIA…PRDA) and 193–366 (IKIA…KSAV). Residues 9 to 16 (GRPNVGKS), 56 to 60 (DTGGI), 118 to 121 (NKID), 199 to 206 (GRPNVGKS), 246 to 250 (DTAGV), and 311 to 314 (NKWD) contribute to the GTP site. One can recognise a KH-like domain in the interval 367–451 (TRWPTSRLTQ…PIRIEYKGGE (85 aa)). A compositionally biased stretch (basic and acidic residues) spans 448 to 461 (KGGENPYEGKKNTL). Positions 448–487 (KGGENPYEGKKNTLTDRQVNKKRRLMSHHKKAEKKRRDKR) are disordered. Residues 467 to 487 (NKKRRLMSHHKKAEKKRRDKR) show a composition bias toward basic residues.

It belongs to the TRAFAC class TrmE-Era-EngA-EngB-Septin-like GTPase superfamily. EngA (Der) GTPase family. As to quaternary structure, associates with the 50S ribosomal subunit.

GTPase that plays an essential role in the late steps of ribosome biogenesis. The chain is GTPase Der from Pseudomonas putida (strain W619).